Here is a 479-residue protein sequence, read N- to C-terminus: 5-hydroxytryptamine receptor 2B (479 aa).

At 1–55 (MASSYKMSEQSTISEHILQKTCDHLILTDRSGLKAESAAEEMKQTAENQGNTVHW) the chain is on the extracellular side. Residues 56 to 78 (AALLIFAVIIPTIGGNILVILAV) traverse the membrane as a helical segment. Topologically, residues 79 to 89 (SLEKRLQYATN) are cytoplasmic. Residues 90 to 112 (YFLMSLAVADLLVGLFVMPIALL) traverse the membrane as a helical segment. The Extracellular segment spans residues 113–128 (TIMFEATWPLPLALCP). Residues cysteine 127 and cysteine 206 are joined by a disulfide bond. A helical transmembrane segment spans residues 129 to 150 (AWLFLDVLFSTASIMHLCAISL). Residues aspartate 134 and threonine 139 each coordinate ergotamine. Residues 151–153 (DRY) carry the DRY motif; important for ligand-induced conformation changes motif. Residues 151-170 (DRYIAIKKPIQANQCNSRTT) lie on the Cytoplasmic side of the membrane. Residues 171–191 (AFVKITVVWLISIGIAIPVPI) traverse the membrane as a helical segment. Residues 192–215 (KGIEADVVNAHNITCELTKDRFGS) are Extracellular-facing. Asparagine 203 carries an N-linked (GlcNAc...) asparagine glycan. An ergotamine-binding site is contributed by leucine 208. The [DE]RFG motif; may stabilize a conformation that preferentially activates signaling via beta-arrestin family members signature appears at 211-214 (DRFG). Residues 216 to 238 (FMLFGSLAAFFAPLTIMIVTYFL) traverse the membrane as a helical segment. Topologically, residues 239 to 323 (TIHALRKKAY…TISNEQRASK (85 aa)) are cytoplasmic. The chain crosses the membrane as a helical span at residues 324–344 (VLGIVFLFFLLMWCPFFITNV). Over 345–359 (TLALCDSCNQTTLKT) the chain is Extracellular. Cysteine 349 and cysteine 352 are joined by a disulfide. N-linked (GlcNAc...) asparagine glycosylation occurs at asparagine 353. A helical membrane pass occupies residues 360 to 381 (LLQIFVWVGYVSSGVNPLIYTL). The NPxxY motif; important for ligand-induced conformation changes and signaling motif lies at 375 to 379 (NPLIY). Residues 382–479 (FNKTFREAFG…DKVEDQVSYI (98 aa)) lie on the Cytoplasmic side of the membrane. Cysteine 396 carries the S-palmitoyl cysteine lipid modification. A PDZ-binding motif is present at residues 477–479 (SYI).

This sequence belongs to the G-protein coupled receptor 1 family. As to quaternary structure, interacts (via C-terminus) with MPDZ. As to expression, stomach fundus.

The protein localises to the cell membrane. The protein resides in the synapse. It localises to the synaptosome. Its function is as follows. G-protein coupled receptor for 5-hydroxytryptamine (serotonin). Also functions as a receptor for various ergot alkaloid derivatives and psychoactive substances. Ligand binding causes a conformation change that triggers signaling via guanine nucleotide-binding proteins (G proteins) and modulates the activity of downstream effectors. HTR2B is coupled to G(q)/G(11) G alpha proteins and activates phospholipase C-beta, releasing diacylglycerol (DAG) and inositol 1,4,5-trisphosphate (IP3) second messengers that modulate the activity of phosphatidylinositol 3-kinase and promote the release of Ca(2+) ions from intracellular stores, respectively. Beta-arrestin family members inhibit signaling via G proteins and mediate activation of alternative signaling pathways. Plays a role in the regulation of dopamine and 5-hydroxytryptamine release, 5-hydroxytryptamine uptake and in the regulation of extracellular dopamine and 5-hydroxytryptamine levels, and thereby affects neural activity. May play a role in the perception of pain. Plays a role in the regulation of behavior, including impulsive behavior. Required for normal proliferation of embryonic cardiac myocytes and normal heart development. Protects cardiomyocytes against apoptosis. Plays a role in the adaptation of pulmonary arteries to chronic hypoxia. Plays a role in vasoconstriction. Required for normal osteoblast function and proliferation, and for maintaining normal bone density. Required for normal proliferation of the interstitial cells of Cajal in the intestine. This Rattus norvegicus (Rat) protein is 5-hydroxytryptamine receptor 2B (Htr2b).